Consider the following 556-residue polypeptide: Potassium-transporting ATPase potassium-binding subunit (556 aa).

Transmembrane regions (helical) follow at residues 6 to 26 (AGILFALSLALALAAVHVPLG), 65 to 85 (SVLAFSAVSILFLFGLQLLQG), 133 to 153 (GLSVQNFVSAAVGMAVAMAFV), 176 to 196 (LRILLPLSIIGAIILVSGGVI), 249 to 269 (PTTWTNWVEIFLLSCIAFSLP), 283 to 303 (AAILAVMAVIATLSLSLMMLF), 378 to 398 (GLYSMLVLAVITVFVAGLMVG), 419 to 439 (YFLVTPLIVLIGTAVAMALPG), 483 to 503 (ALGLAMVFGRFLPIILVLALA), and 526 to 546 (FVGMVTGVTLILVALTFLPVL).

It belongs to the KdpA family. In terms of assembly, the system is composed of three essential subunits: KdpA, KdpB and KdpC.

The protein localises to the cell membrane. Functionally, part of the high-affinity ATP-driven potassium transport (or Kdp) system, which catalyzes the hydrolysis of ATP coupled with the electrogenic transport of potassium into the cytoplasm. This subunit binds the extracellular potassium ions and delivers the ions to the membrane domain of KdpB through an intramembrane tunnel. The polypeptide is Potassium-transporting ATPase potassium-binding subunit (Mycobacterium sp. (strain KMS)).